A 528-amino-acid polypeptide reads, in one-letter code: Tyrosine--tRNA ligase, cytoplasmic (528 aa).

Residue methionine 1 is modified to N-acetylmethionine. Glycine 2 is subject to N-acetylglycine; in Tyrosine--tRNA ligase, cytoplasmic, N-terminally processed. Residue tyrosine 39 participates in L-tyrosine binding. Tyrosine 39 serves as a coordination point for trans-resveratrol. The short motif at 44-52 (TTGKPHVAY) is the 'HIGH' region element. Residues tyrosine 166, glutamine 170, aspartate 173, and glutamine 188 each contribute to the L-tyrosine site. The trans-resveratrol site is built by glutamine 170 and aspartate 173. Lysine 197 is subject to N6-acetyllysine. Residue serine 205 is modified to Phosphoserine. Lysine 206 is modified (N6-acetyllysine). The 'KMSKS' region signature appears at 222-226 (KMSSS). The Nuclear localization signal signature appears at 242-247 (KKKLKK). The disordered stretch occupies residues 339-363 (AAYPDPSKQKPMAKGPAKNSEPEEV). The tRNA-binding domain occupies 364–468 (IPSRLDIRVG…AGSAPGERVF (105 aa)). Serine 386 bears the Phosphoserine mark. An N6-acetyllysine mark is found at lysine 474, lysine 482, and lysine 490.

It belongs to the class-I aminoacyl-tRNA synthetase family. In terms of assembly, homodimer. Interacts (when binding to resveratrol) with PARP1; interaction stimulates the poly-ADP-ribosyltransferase activity of PARP1.

It localises to the cytoplasm. The protein resides in the nucleus. The catalysed reaction is tRNA(Tyr) + L-tyrosine + ATP = L-tyrosyl-tRNA(Tyr) + AMP + diphosphate + H(+). Resveratrol strongly inhibits the tyrosine--tRNA ligase activity. Tyrosine--tRNA ligase that catalyzes the attachment of tyrosine to tRNA(Tyr) in a two-step reaction: tyrosine is first activated by ATP to form Tyr-AMP and then transferred to the acceptor end of tRNA(Tyr). Also acts as a positive regulator of poly-ADP-ribosylation in the nucleus, independently of its tyrosine--tRNA ligase activity. Activity is switched upon resveratrol-binding: resveratrol strongly inhibits the tyrosine--tRNA ligase activity and promotes relocalization to the nucleus, where YARS1 specifically stimulates the poly-ADP-ribosyltransferase activity of PARP1. This is Tyrosine--tRNA ligase, cytoplasmic (YARS1) from Pongo abelii (Sumatran orangutan).